Here is a 268-residue protein sequence, read N- to C-terminus: MADRFTKMHGLGNDFVVIDARVAPVEMTPARAHAIADRRHGIGCDQLILLEPSTSADVKMRIFNADGGEVEACGNATRCVATLIGKPAVIETLAGMLRVTPADGGAEVTLGEPVFDWDHIPLAMPMDTRDMPVAWDELEHGAAVNVGNPHIVFFVPEADAVALDQLGPRIETDPLFPERVNVNVASLDGENQLQLRVWERGVGLTQACGTGACATAVAAIRAGLVRSPVTVALPGGDLVIRWAPGEPIVMSGAATRVFDGETDWAQFG.

Residues N13, Q46, and N64 each coordinate substrate. The active-site Proton donor is the C73. Residues 74-75, N148, N181, and 199-200 each bind substrate; these read GN and ER. Residue C208 is the Proton acceptor of the active site. A substrate-binding site is contributed by 209–210; sequence GT.

This sequence belongs to the diaminopimelate epimerase family. Homodimer.

Its subcellular location is the cytoplasm. The catalysed reaction is (2S,6S)-2,6-diaminopimelate = meso-2,6-diaminopimelate. It functions in the pathway amino-acid biosynthesis; L-lysine biosynthesis via DAP pathway; DL-2,6-diaminopimelate from LL-2,6-diaminopimelate: step 1/1. Its function is as follows. Catalyzes the stereoinversion of LL-2,6-diaminopimelate (L,L-DAP) to meso-diaminopimelate (meso-DAP), a precursor of L-lysine and an essential component of the bacterial peptidoglycan. The chain is Diaminopimelate epimerase from Sphingopyxis alaskensis (strain DSM 13593 / LMG 18877 / RB2256) (Sphingomonas alaskensis).